Here is a 235-residue protein sequence, read N- to C-terminus: UPF0173 metal-dependent hydrolase Oant_3663 (235 aa).

The protein belongs to the UPF0173 family.

The sequence is that of UPF0173 metal-dependent hydrolase Oant_3663 from Brucella anthropi (strain ATCC 49188 / DSM 6882 / CCUG 24695 / JCM 21032 / LMG 3331 / NBRC 15819 / NCTC 12168 / Alc 37) (Ochrobactrum anthropi).